Here is a 531-residue protein sequence, read N- to C-terminus: 2-isopropylmalate synthase (531 aa).

The Pyruvate carboxyltransferase domain maps to 8 to 284; the sequence is IIIFDTTLRD…LTNIDTKQIY (277 aa). 4 residues coordinate Mn(2+): D17, H208, H210, and N244. Residues 408–531 are regulatory domain; that stretch reads RVELVQVSCG…TQDKQTEVTA (124 aa).

Belongs to the alpha-IPM synthase/homocitrate synthase family. LeuA type 1 subfamily. Homodimer. Mn(2+) serves as cofactor.

Its subcellular location is the cytoplasm. The enzyme catalyses 3-methyl-2-oxobutanoate + acetyl-CoA + H2O = (2S)-2-isopropylmalate + CoA + H(+). It functions in the pathway amino-acid biosynthesis; L-leucine biosynthesis; L-leucine from 3-methyl-2-oxobutanoate: step 1/4. Catalyzes the condensation of the acetyl group of acetyl-CoA with 3-methyl-2-oxobutanoate (2-ketoisovalerate) to form 3-carboxy-3-hydroxy-4-methylpentanoate (2-isopropylmalate). The sequence is that of 2-isopropylmalate synthase from Trichormus variabilis (strain ATCC 29413 / PCC 7937) (Anabaena variabilis).